A 307-amino-acid chain; its full sequence is MSSLIKSINLDKINHSQSTVKDYILLMKPRVMSLVIFTCFVGMLLAPYSVHPFIASIAVVCIAFGAGSAGAINMWYDRDIDSLMKRTQKRPIVRGAIEPDEALSFGLITGFFAVFFMALCVNLLASFLLLFTIFYYICIYTIWLKRRSIQNIVIGGVSGALPPVIGYAAVSNTISLQSVILFLIILIWTPPHSWALALFCNEDYKNCKVPMMPTIKGALYAKKQILIYSFLLFIVSLMPFFIGMSNFIYLIISGILGLVFLYYAGSLFYDTPDNKQAKRLFVYSIFYLFFIFLLLYLTNTILSISER.

The next 9 membrane-spanning stretches (helical) occupy residues 31 to 51, 52 to 72, 102 to 119, 123 to 145, 151 to 171, 179 to 199, 225 to 245, 247 to 267, and 281 to 301; these read VMSL…YSVH, PFIA…AGAI, ALSF…FMAL, LLAS…IWLK, NIVI…AAVS, VILF…LALF, ILIY…IGMS, FIYL…AGSL, and FVYS…TNTI.

Belongs to the UbiA prenyltransferase family. Protoheme IX farnesyltransferase subfamily.

It localises to the cell inner membrane. The catalysed reaction is heme b + (2E,6E)-farnesyl diphosphate + H2O = Fe(II)-heme o + diphosphate. Its pathway is porphyrin-containing compound metabolism; heme O biosynthesis; heme O from protoheme: step 1/1. In terms of biological role, converts heme B (protoheme IX) to heme O by substitution of the vinyl group on carbon 2 of heme B porphyrin ring with a hydroxyethyl farnesyl side group. This chain is Protoheme IX farnesyltransferase, found in Rickettsia canadensis (strain McKiel).